A 358-amino-acid polypeptide reads, in one-letter code: Aromatic amino acid aminotransferase (358 aa).

Residue Lys222 is modified to N6-(pyridoxal phosphate)lysine.

Belongs to the class-II pyridoxal-phosphate-dependent aminotransferase family. As to quaternary structure, homodimer. It depends on pyridoxal 5'-phosphate as a cofactor.

It catalyses the reaction an aromatic L-alpha-amino acid + 2-oxoglutarate = an aromatic oxo-acid + L-glutamate. Its function is as follows. Aminotransferase that catalyzes the conversion of aromatic amino acids and 2-oxoglutarate into corresponding aromatic oxo acids and L-glutamate. This is Aromatic amino acid aminotransferase from Mycobacterium sp. (strain JLS).